Consider the following 373-residue polypeptide: S-adenosylmethionine:tRNA ribosyltransferase-isomerase (373 aa).

It belongs to the QueA family. Monomer.

It localises to the cytoplasm. The catalysed reaction is 7-aminomethyl-7-carbaguanosine(34) in tRNA + S-adenosyl-L-methionine = epoxyqueuosine(34) in tRNA + adenine + L-methionine + 2 H(+). It participates in tRNA modification; tRNA-queuosine biosynthesis. Transfers and isomerizes the ribose moiety from AdoMet to the 7-aminomethyl group of 7-deazaguanine (preQ1-tRNA) to give epoxyqueuosine (oQ-tRNA). This chain is S-adenosylmethionine:tRNA ribosyltransferase-isomerase, found in Prochlorococcus marinus (strain MIT 9515).